Consider the following 110-residue polypeptide: Chorion class B protein M2410 (110 aa).

Tandem repeats lie at residues 1–4, 5–9, 10–14, and 15–19. Positions 1-19 are 4 X 5 AA tandem repeats of G-Y-G-G-L; it reads YGGLGYGGLGYGGLGYGGL. The left arm stretch occupies residues 1–27; the sequence is YGGLGYGGLGYGGLGYGGLGGGCGRGF. The interval 28–96 is central domain; sequence SGGGLPVATA…GNGDVGITRE (69 aa). Positions 97–110 are right arm (Gly-rich tandem repeats); the sequence is GGLGYGAGYGGGYG.

Belongs to the chorion protein family.

In terms of biological role, this protein is one of many from the eggshell of the silk moth. The chain is Chorion class B protein M2410 from Bombyx mori (Silk moth).